The following is a 408-amino-acid chain: Imidazolonepropionase (408 aa).

Positions 73 and 75 each coordinate Fe(3+). 2 residues coordinate Zn(2+): histidine 73 and histidine 75. The 4-imidazolone-5-propanoate site is built by arginine 82, tyrosine 145, and histidine 178. Tyrosine 145 contacts N-formimidoyl-L-glutamate. Histidine 243 lines the Fe(3+) pocket. A Zn(2+)-binding site is contributed by histidine 243. Glutamine 246 provides a ligand contact to 4-imidazolone-5-propanoate. Aspartate 318 provides a ligand contact to Fe(3+). Zn(2+) is bound at residue aspartate 318. The N-formimidoyl-L-glutamate site is built by asparagine 320 and glycine 322. Residue serine 323 coordinates 4-imidazolone-5-propanoate.

The protein belongs to the metallo-dependent hydrolases superfamily. HutI family. Zn(2+) serves as cofactor. The cofactor is Fe(3+).

The protein localises to the cytoplasm. It carries out the reaction 4-imidazolone-5-propanoate + H2O = N-formimidoyl-L-glutamate. The protein operates within amino-acid degradation; L-histidine degradation into L-glutamate; N-formimidoyl-L-glutamate from L-histidine: step 3/3. Its function is as follows. Catalyzes the hydrolytic cleavage of the carbon-nitrogen bond in imidazolone-5-propanoate to yield N-formimidoyl-L-glutamate. It is the third step in the universal histidine degradation pathway. This Shewanella piezotolerans (strain WP3 / JCM 13877) protein is Imidazolonepropionase.